The chain runs to 810 residues: DNA ligase (810 aa).

NAD(+) is bound by residues 46 to 50, 95 to 96, and Glu129; these read DAEYD and SL. Lys131 functions as the N6-AMP-lysine intermediate in the catalytic mechanism. 4 residues coordinate NAD(+): Arg152, Glu189, Lys305, and Lys329. Cys434, Cys437, Cys458, and Cys464 together coordinate Zn(2+). Positions 528-548 are disordered; it reads ERRAESGTAEPPKKAAKKKGD. The 80-residue stretch at 731 to 810 folds into the BRCT domain; it reads AAASTFAGKT…DDWLAMVAQG (80 aa).

Belongs to the NAD-dependent DNA ligase family. LigA subfamily. Mg(2+) serves as cofactor. Mn(2+) is required as a cofactor.

It carries out the reaction NAD(+) + (deoxyribonucleotide)n-3'-hydroxyl + 5'-phospho-(deoxyribonucleotide)m = (deoxyribonucleotide)n+m + AMP + beta-nicotinamide D-nucleotide.. Functionally, DNA ligase that catalyzes the formation of phosphodiester linkages between 5'-phosphoryl and 3'-hydroxyl groups in double-stranded DNA using NAD as a coenzyme and as the energy source for the reaction. It is essential for DNA replication and repair of damaged DNA. The polypeptide is DNA ligase (Methylobacterium radiotolerans (strain ATCC 27329 / DSM 1819 / JCM 2831 / NBRC 15690 / NCIMB 10815 / 0-1)).